The chain runs to 436 residues: Prenyltransferase nscD (436 aa).

The protein belongs to the tryptophan dimethylallyltransferase family.

Its pathway is secondary metabolite biosynthesis. Its function is as follows. Prenyltransferase; part of the gene cluster that mediates the biosynthesis of neosartoricin B, a prenylated anthracenone that probably exhibits T-cell antiproliferative activity, suggestive of a physiological role as an immunosuppressive agent. The non-reducing polyketide synthase nscA probably synthesizes and cyclizes the decaketide backbone. The hydrolase nscB then mediates the product release through hydrolysis followed by spontaneous decarboxylation. The prenyltransferase nscD catalyzes the addition of the dimethylallyl group to the aromatic C5. The FAD-dependent monooxygenase nscC is then responsible for the stereospecific hydroxylation at C2. Neosartoricin B can be converted into two additional compounds neosartoricins C and D. Neosartoricin C is a spirocyclic compound that is cyclized through the attack of C3 hydroxyl on C14, followed by dehydration. On the other hand, neosartoricin D is a further cyclized compound in which attack of C2 on C14 in neosartoricin C results in the formation of the acetal-containing dioxabicyclo-octanone ring. Both of these compounds are novel and possibly represent related metabolites of the gene cluster. This chain is Prenyltransferase nscD, found in Trichophyton equinum (strain ATCC MYA-4606 / CBS 127.97) (Horse ringworm fungus).